Here is a 353-residue protein sequence, read N- to C-terminus: L-tryptophan dehydrogenase (353 aa).

An NAD(+)-binding site is contributed by Arg-44. Lys-80 (proton donor/acceptor) is an active-site residue. Residues Asp-114, Thr-146, 176 to 181, Lys-204, and 255 to 257 each bind NAD(+); these read GLGNVG and AAN.

Belongs to the Glu/Leu/Phe/Val dehydrogenases family. As to quaternary structure, homodimer.

It carries out the reaction L-tryptophan + NAD(+) + H2O = indole-3-pyruvate + NH4(+) + NADH + H(+). Its activity is regulated as follows. Highly susceptible to inhibition by indole-3-pyruvate. Activity is not affected by the presence of metal ions, EDTA, KCl or DMSO. Its function is as follows. Catalyzes the reversible oxidative deamination of L-tryptophan to indole-3-pyruvate in the presence of NAD(+). Shows weak activity with L-phenylalanine, but cannot use other L-amino acids and D-Trp. Cannot use NADP(+) for oxidative deamination of L-Trp, and shows only weak activity with NADPH for reductive amination of indole-3-pyruvate. Involved in the biosynthesis of scytonemin, a cyanobacterial radiation-absorbing pigment. The chain is L-tryptophan dehydrogenase from Nostoc punctiforme.